Consider the following 320-residue polypeptide: Arylacetonitrilase (320 aa).

Residues 5–286 enclose the CN hydrolase domain; sequence IKASVVQAST…EGVISAELDL (282 aa). Glu-46 (proton acceptor) is an active-site residue. Lys-133 is an active-site residue. Cys-178 acts as the Nucleophile in catalysis.

The protein belongs to the carbon-nitrogen hydrolase superfamily. Nitrilase family.

It carries out the reaction a nitrile + 2 H2O = a carboxylate + NH4(+). In terms of biological role, nitrilase that hydrolyzes preferentially fumaronitrile, while 3-phenylpropionitrile, beta-cyano-L-alanine and 4-cyanopyridine are transformed at much lower rates. This Trametes versicolor (strain FP-101664) (White-rot fungus) protein is Arylacetonitrilase (nit).